We begin with the raw amino-acid sequence, 213 residues long: Orotate phosphoribosyltransferase (213 aa).

Lysine 26 provides a ligand contact to 5-phospho-alpha-D-ribose 1-diphosphate. 34 to 35 serves as a coordination point for orotate; the sequence is FF. Residues 72 to 73, arginine 98, lysine 99, lysine 102, and 123 to 131 contribute to the 5-phospho-alpha-D-ribose 1-diphosphate site; these read YK and DDVISAGTS. 2 residues coordinate orotate: serine 127 and arginine 155.

It belongs to the purine/pyrimidine phosphoribosyltransferase family. PyrE subfamily. In terms of assembly, homodimer. Mg(2+) serves as cofactor.

It carries out the reaction orotidine 5'-phosphate + diphosphate = orotate + 5-phospho-alpha-D-ribose 1-diphosphate. Its pathway is pyrimidine metabolism; UMP biosynthesis via de novo pathway; UMP from orotate: step 1/2. Functionally, catalyzes the transfer of a ribosyl phosphate group from 5-phosphoribose 1-diphosphate to orotate, leading to the formation of orotidine monophosphate (OMP). This is Orotate phosphoribosyltransferase from Neisseria gonorrhoeae (strain NCCP11945).